The following is a 509-amino-acid chain: Zinc finger protein CKR1 (509 aa).

In terms of domain architecture, KRAB spans 1 to 61; sequence MEPYVLLDPR…GSEEPQTHPP (61 aa). Basic and acidic residues-rich tracts occupy residues 41 to 50 and 98 to 112; these read EDAVGLKEDA and PKRDGVKPSRVRDRP. The tract at residues 41–114 is disordered; the sequence is EDAVGLKEDA…PSRVRDRPFG (74 aa). 11 C2H2-type zinc fingers span residues 113-135, 141-163, 169-191, 197-219, 225-247, 279-303, 303-325, 331-353, 359-383, 387-409, and 415-437; these read FGCPDCGKSFPWASHLERHRRVH, YSCPECGESYSQSSHLVQHRRTH, HKCQHCGKPFAGAAQLLAHSRGH, HRCGDCGKGFVWASHLERHRRVH, YECPECGEAFSQGSHLTKHRRSH, QRCAECGKAFRAAPPLRRHRRERSH, HRCGDCGKGFAWASHLQRHRRVH, FPCGLCGERFSQKAHLLQHGKTH, YKCGDCGKRFENAPPFLAHRRGHAA, and FTCGDCGKGFAWASHLQRHRRVH. The tract at residues 428 to 479 is disordered; the sequence is SHLTKHRRSHGPKAPLLPVQGRGEAGEPLRASPLSSGAEQRDGRRAQRGGVE.

This sequence belongs to the krueppel C2H2-type zinc-finger protein family.

Its subcellular location is the nucleus. This Gallus gallus (Chicken) protein is Zinc finger protein CKR1.